Here is a 210-residue protein sequence, read N- to C-terminus: Hydrogenase expression/formation protein HupD (210 aa).

Residues Glu22, Asp68, and His99 each coordinate Ni(2+).

The protein belongs to the peptidase A31 family.

Not known. Could be involved in the processing of hydrogenase. This is Hydrogenase expression/formation protein HupD (hupD) from Rhodobacter capsulatus (Rhodopseudomonas capsulata).